The following is a 126-amino-acid chain: Glycine cleavage system H protein (126 aa).

In terms of domain architecture, Lipoyl-binding spans 20–102 (IGTIGITDYA…LGDGWFFKVR (83 aa)). Lys-61 carries the post-translational modification N6-lipoyllysine.

The protein belongs to the GcvH family. The glycine cleavage system is composed of four proteins: P, T, L and H. Requires (R)-lipoate as cofactor.

Its function is as follows. The glycine cleavage system catalyzes the degradation of glycine. The H protein shuttles the methylamine group of glycine from the P protein to the T protein. This is Glycine cleavage system H protein from Rhodospirillum rubrum (strain ATCC 11170 / ATH 1.1.1 / DSM 467 / LMG 4362 / NCIMB 8255 / S1).